Consider the following 692-residue polypeptide: Proprotein convertase subtilisin/kexin type 9 (692 aa).

The first 30 residues, 1–30, serve as a signal peptide directing secretion; sequence MGTVSSRRSWWPLPLLLLLLLLLGPAGARA. Positions 31-152 are excised as a propeptide; that stretch reads QEDEDGDYEE…IEEDSSVFAQ (122 aa). Tyr38 bears the Sulfotyrosine mark. A Phosphoserine modification is found at Ser47. In terms of domain architecture, Inhibitor I9 spans 77–149; it reads TYVVVLKEET…VDYIEEDSSV (73 aa). The 307-residue stretch at 155–461 folds into the Peptidase S8 domain; that stretch reads PWNLERITPP…GWQLFCRTVW (307 aa). Active-site charge relay system residues include Asp186 and His226. 2 disulfide bridges follow: Cys223–Cys255 and Cys323–Cys358. Ser386 (charge relay system) is an active-site residue. Residues 450 to 692 form a C-terminal domain region; it reads GAGWQLFCRT…HLAQASQELQ (243 aa). Disulfide bonds link Cys457–Cys527, Cys477–Cys526, and Cys486–Cys509. Residue Asn533 is glycosylated (N-linked (GlcNAc...) asparagine). Cystine bridges form between Cys534–Cys601, Cys552–Cys600, Cys562–Cys588, Cys608–Cys679, Cys626–Cys678, and Cys635–Cys654. Ser688 bears the Phosphoserine mark.

It belongs to the peptidase S8 family. As to quaternary structure, monomer. Can self-associate to form dimers and higher multimers which may have increased LDLR degrading activity. The precursor protein but not the mature protein may form multimers. Interacts with APOB, VLDLR, LRP8/APOER2 and BACE1. The full-length immature form (pro-PCSK9) interacts with SCNN1A, SCNN1B and SCNN1G. The pro-PCSK9 form (via C-terminal domain) interacts with LDLR. Interacts (via the C-terminal domain) with ANXA2 (via repeat Annexin 1); the interaction inhibits the degradation of LDLR. Ca(2+) serves as cofactor. In terms of processing, cleavage by furin and PCSK5 generates a truncated inactive protein that is unable to induce LDLR degradation. Post-translationally, undergoes autocatalytic cleavage in the endoplasmic reticulum to release the propeptide from the N-terminus and the cleavage of the propeptide is strictly required for its maturation and activation. The cleaved propeptide however remains associated with the catalytic domain through non-covalent interactions, preventing potential substrates from accessing its active site. As a result, it is secreted from cells as a propeptide-containing, enzymatically inactive protein. Phosphorylation protects the propeptide against proteolysis.

It localises to the cytoplasm. The protein resides in the secreted. Its subcellular location is the endosome. The protein localises to the lysosome. It is found in the cell surface. It localises to the endoplasmic reticulum. The protein resides in the golgi apparatus. Its activity is regulated as follows. Its proteolytic activity is autoinhibited by the non-covalent binding of the propeptide to the catalytic domain. Inhibited by EGTA. Crucial player in the regulation of plasma cholesterol homeostasis. Binds to low-density lipid receptor family members: low density lipoprotein receptor (LDLR), very low density lipoprotein receptor (VLDLR), apolipoprotein E receptor (LRP1/APOER) and apolipoprotein receptor 2 (LRP8/APOER2), and promotes their degradation in intracellular acidic compartments. Acts via a non-proteolytic mechanism to enhance the degradation of the hepatic LDLR through a clathrin LDLRAP1/ARH-mediated pathway. May prevent the recycling of LDLR from endosomes to the cell surface or direct it to lysosomes for degradation. Can induce ubiquitination of LDLR leading to its subsequent degradation. Inhibits intracellular degradation of APOB via the autophagosome/lysosome pathway in a LDLR-independent manner. Involved in the disposal of non-acetylated intermediates of BACE1 in the early secretory pathway. Inhibits epithelial Na(+) channel (ENaC)-mediated Na(+) absorption by reducing ENaC surface expression primarily by increasing its proteasomal degradation. Regulates neuronal apoptosis via modulation of LRP8/APOER2 levels and related anti-apoptotic signaling pathways. The polypeptide is Proprotein convertase subtilisin/kexin type 9 (PCSK9) (Pan troglodytes (Chimpanzee)).